An 839-amino-acid polypeptide reads, in one-letter code: MAQFDTEYQRLEASYSDSPPGEEDLLVHVAEGSKSPWHHIENLDLFFSRVYNLHQKNGFTCMLIGEIFELMQFLFVVAFTTFLVSCVDYDILFANKMVNHSLHPTEPVKVTLPDAFLPAQVCSARIQENGSLITILVIAGVFWIHRLIKFIYNICCYWEIHSFYLHALRIPMSALPYCTWQEVQARIVQTQKEHQICIHKRELTELDIYHRILRFQNYMVALVNKSLLPLRFRLPGLGEVVFFTRGLKYNFELILFWGPGSLFLNEWSLKAEYKRGGQRLELAQRLSNRILWIGIANFLLCPLILIWQILYAFFSYAEVLKREPGALGARCWSLYGRCYLRHFNELEHELQSRLNRGYKPASKYMNCFLSPLLTLLAKNGAFFAGSILAVLIALTIYDEDVLAVEHVLTTVTLLGVTVTVCRSFIPDQHMVFCPEQLLRVILAHIHYMPDHWQGNAHRSQTRDEFAQLFQYKAVFILEELLSPIVTPLILIFCLRPRALEIIDFFRNFTVEVVGVGDTCSFAQMDVRQHGHPQWLSGGQTEASVYQQAEDGKTELSLMHFAITNPGWQPPRESTAFLGFLKEQVQRDGAAAGLAQGGLLPENALFTSIQSLQSESEPLSLIANVVAGSSCRGPPLSRDLQGSRHRADVASALRSFSPLQPGQAPQGRVPSTMTGSGVDARTASSGSSVWEGQLQSLVLSEYASTEMSLHALYMHQLHKQQTQAEPERHVWHRRESDESGESAPEEGGEGARAPQPIPRSASYPCATPRPGAPETTALHGGFQRRYGGITDPGTVPRAPSHFSRLPLGGWAEDGQPASRHPEPVPEEGSEDELPPQVHKV.

N-acetylalanine is present on Ala-2. At 2–61 (AQFDTEYQRLEASYSDSPPGEEDLLVHVAEGSKSPWHHIENLDLFFSRVYNLHQKNGFTC) the chain is on the cytoplasmic side. The Tyrosine-based sorting signal motif lies at 8 to 11 (YQRL). A phosphoserine mark is found at Ser-14, Ser-16, and Ser-18. The helical transmembrane segment at 62-84 (MLIGEIFELMQFLFVVAFTTFLV) threads the bilayer. Residues 85–128 (SCVDYDILFANKMVNHSLHPTEPVKVTLPDAFLPAQVCSARIQE) lie on the Lumenal side of the membrane. Asn-99 is a glycosylation site (N-linked (GlcNAc...) asparagine). Residues 129-154 (NGSLITILVIAGVFWIHRLIKFIYNI) traverse the membrane as a helical segment. At 155 to 290 (CCYWEIHSFY…ELAQRLSNRI (136 aa)) the chain is on the cytoplasmic side. Residues 291–301 (LWIGIANFLLC) lie within the membrane without spanning it. Residues 302-319 (PLILIWQILYAFFSYAEV) are Cytoplasmic-facing. The stretch at 320-328 (LKREPGALG) is an intramembrane region. Residues 329–371 (ARCWSLYGRCYLRHFNELEHELQSRLNRGYKPASKYMNCFLSP) lie on the Cytoplasmic side of the membrane. Residues 372-397 (LLTLLAKNGAFFAGSILAVLIALTIY) traverse the membrane as a helical segment. Topologically, residues 398–406 (DEDVLAVEH) are lumenal. Residues 407 to 424 (VLTTVTLLGVTVTVCRSF) traverse the membrane as a helical segment. Residues 425 to 470 (IPDQHMVFCPEQLLRVILAHIHYMPDHWQGNAHRSQTRDEFAQLFQ) lie on the Cytoplasmic side of the membrane. An intramembrane segment occupies 471–480 (YKAVFILEEL). Topologically, residues 481–483 (LSP) are cytoplasmic. Residues 484 to 492 (IVTPLILIF) lie within the membrane without spanning it. Topologically, residues 493–839 (CLRPRALEII…DELPPQVHKV (347 aa)) are cytoplasmic. Phosphoserine occurs at positions 656, 735, 738, 741, and 828. Disordered stretches follow at residues 656–689 (SPLQPGQAPQGRVPSTMTGSGVDARTASSGSSVW) and 717–839 (HKQQ…VHKV). Residues 724–736 (EPERHVWHRRESD) are compositionally biased toward basic and acidic residues. Acidic residues-rich tracts occupy residues 737-747 (ESGESAPEEGG) and 823-832 (VPEEGSEDEL).

The protein belongs to the ATG9 family. Homotrimer; forms a homotrimer with a central pore that forms a path between the two membrane leaflets. Interacts (via cytoplasmic its C-terminus) with ATG2A. Interacts with SUPT20H. Interacts (via the tyrosine-based sorting signal motif) with AP4M1; promoting association with the AP-4 complex. Interacts with ARFIP1 and ARFIP2. Interacts with PI4K2A and PI4KB. Interacts with ATG4A; the interaction is direct and promotes ATG9A trafficking. Ufmylated in a DDRGK1 dependent manner.

The protein localises to the preautophagosomal structure membrane. The protein resides in the cytoplasmic vesicle. It localises to the autophagosome membrane. Its subcellular location is the golgi apparatus. It is found in the trans-Golgi network membrane. The protein localises to the late endosome membrane. The protein resides in the recycling endosome membrane. It localises to the endoplasmic reticulum membrane. Its subcellular location is the mitochondrion membrane. The enzyme catalyses a 1,2-diacyl-sn-glycero-3-phosphocholine(in) = a 1,2-diacyl-sn-glycero-3-phosphocholine(out). It catalyses the reaction a 1,2-diacyl-sn-glycero-3-phospho-L-serine(in) = a 1,2-diacyl-sn-glycero-3-phospho-L-serine(out). It carries out the reaction a 1,2-diacyl-sn-glycero-3-phosphoethanolamine(in) = a 1,2-diacyl-sn-glycero-3-phosphoethanolamine(out). Phospholipid scramblase involved in autophagy by mediating autophagosomal membrane expansion. Cycles between the preautophagosomal structure/phagophore assembly site (PAS) and the cytoplasmic vesicle pool and supplies membrane for the growing autophagosome. Lipid scramblase activity plays a key role in preautophagosomal structure/phagophore assembly by distributing the phospholipids that arrive through ATG2 (ATG2A or ATG2B) from the cytoplasmic to the luminal leaflet of the bilayer, thereby driving autophagosomal membrane expansion. Also required to supply phosphatidylinositol 4-phosphate to the autophagosome initiation site by recruiting the phosphatidylinositol 4-kinase beta (PI4KB) in a process dependent on ARFIP2, but not ARFIP1. In addition to autophagy, also plays a role in necrotic cell death. This chain is Autophagy-related protein 9A, found in Rattus norvegicus (Rat).